The primary structure comprises 550 residues: Glucose-6-phosphate isomerase (550 aa).

D-glucose 6-phosphate is bound by residues 164–165, 215–220, Gln-359, Glu-363, and His-394; these read GS and SKTFTT. Glu-363 acts as the Proton donor in catalysis. The active site involves His-394. Thr-455 bears the Phosphothreonine mark. Lys-516 is a D-glucose 6-phosphate binding site. The active site involves Lys-516.

Belongs to the GPI family. Homodimer.

It is found in the cytoplasm. It localises to the cytosol. The catalysed reaction is alpha-D-glucose 6-phosphate = beta-D-fructose 6-phosphate. The protein operates within carbohydrate degradation; glycolysis; D-glyceraldehyde 3-phosphate and glycerone phosphate from D-glucose: step 2/4. In the cytoplasm, catalyzes the conversion of glucose-6-phosphate to fructose-6-phosphate, the second step in glycolysis, and the reverse reaction during gluconeogenesis. The polypeptide is Glucose-6-phosphate isomerase (pgi1) (Schizosaccharomyces pombe (strain 972 / ATCC 24843) (Fission yeast)).